The chain runs to 546 residues: Thermolysin (546 aa).

An N-terminal signal peptide occupies residues Met-1–Ala-25. A propeptide spans Lys-26–Val-228 (activation peptide). The Ca(2+) site is built by Asp-287, Asp-289, Gln-291, and Asp-368. Position 372 (His-372) interacts with Zn(2+). Residue Glu-373 is part of the active site. Zn(2+) contacts are provided by His-376 and Glu-396. Positions 407, 413, 415, 417, 420, 423, 424, 427, and 430 each coordinate Ca(2+). The active-site Proton donor is the His-461.

The protein belongs to the peptidase M4 family. Requires Ca(2+) as cofactor. The cofactor is Zn(2+).

It is found in the secreted. It carries out the reaction Preferential cleavage: Xaa-|-Leu &gt; Xaa-|-Phe.. In terms of biological role, extracellular zinc metalloprotease. The chain is Thermolysin from Alicyclobacillus acidocaldarius subsp. acidocaldarius (Bacillus acidocaldarius).